Here is a 440-residue protein sequence, read N- to C-terminus: Transposon Ty1-ML1 Gag polyprotein (440 aa).

Polar residues-rich tracts occupy residues 1–23 (MESQQLSNYPNISHGSACASVTS), 48–60 (TKANSQQTTTPAS), and 127–152 (QSQFPQYPSSVGTPLSTPSPESGNTF). Disordered stretches follow at residues 1–88 (MESQ…YPQQ), 126–173 (PQSQ…RPPP), and 352–440 (GSRN…PETY). Residues 153–165 (TDSSSADSDMTST) show a composition bias toward low complexity. Residues 299–401 (NNGIHINNKV…NSKSKTARAH (103 aa)) are RNA-binding. Residues 402 to 418 (NVSTSNNSPSTDNDSIS) are compositionally biased toward low complexity. Phosphoserine is present on Ser-416. Polar residues predominate over residues 419–428 (KSTTEPIQLN). Over residues 429–440 (NKHDLHLRPETY) the composition is skewed to basic and acidic residues.

In terms of assembly, homotrimer.

Its subcellular location is the cytoplasm. Its function is as follows. Capsid protein (CA) is the structural component of the virus-like particle (VLP), forming the shell that encapsulates the retrotransposons dimeric RNA genome. The particles are assembled from trimer-clustered units and there are holes in the capsid shells that allow for the diffusion of macromolecules. CA also has nucleocapsid-like chaperone activity, promoting primer tRNA(i)-Met annealing to the multipartite primer-binding site (PBS), dimerization of Ty1 RNA and initiation of reverse transcription. This chain is Transposon Ty1-ML1 Gag polyprotein (TY1A-ML1), found in Saccharomyces cerevisiae (strain ATCC 204508 / S288c) (Baker's yeast).